The sequence spans 257 residues: Trans-aconitate 2-methyltransferase (257 aa).

Belongs to the methyltransferase superfamily. Tam family.

The protein localises to the cytoplasm. It catalyses the reaction trans-aconitate + S-adenosyl-L-methionine = (E)-3-(methoxycarbonyl)pent-2-enedioate + S-adenosyl-L-homocysteine. Functionally, catalyzes the S-adenosylmethionine monomethyl esterification of trans-aconitate. This is Trans-aconitate 2-methyltransferase from Rhizobium meliloti (strain 1021) (Ensifer meliloti).